A 102-amino-acid polypeptide reads, in one-letter code: Small ribosomal subunit protein uS10 (102 aa).

The protein belongs to the universal ribosomal protein uS10 family. As to quaternary structure, part of the 30S ribosomal subunit.

Its function is as follows. Involved in the binding of tRNA to the ribosomes. The polypeptide is Small ribosomal subunit protein uS10 (Frankia alni (strain DSM 45986 / CECT 9034 / ACN14a)).